Reading from the N-terminus, the 438-residue chain is High-affinity gluconate transporter (438 aa).

13 consecutive transmembrane segments (helical) span residues 2–22 (PLVI…RFKM), 23–43 (NGFI…GMPL), 52–72 (AGVG…AMLG), 108–128 (VGFA…VFTI), 134–154 (IPLL…HGFL), 174–194 (TLLY…PVYA), 222–242 (FGVS…RAIA), 258–278 (FLGD…FTFG), 292–312 (LVSS…GGAF), 327–347 (SMMH…AAVL), 349–369 (IALG…APLI), 370–390 (ATTG…SVIF), and 418–438 (MLET…NMVI).

It belongs to the GntP permease family.

It localises to the cell inner membrane. Its pathway is carbohydrate acid metabolism; D-gluconate degradation. Its function is as follows. Part of the gluconate utilization system Gnt-I; high-affinity intake of gluconate. The sequence is that of High-affinity gluconate transporter (gntT) from Escherichia coli (strain K12).